The sequence spans 594 residues: Potassium-transporting ATPase potassium-binding subunit (594 aa).

10 consecutive transmembrane segments (helical) span residues 3 to 23 (ADFL…APLL), 67 to 87 (AVAM…LQRL), 136 to 156 (ALTV…IALV), 179 to 199 (LYVL…QGVV), 287 to 307 (LEML…GEMV), 314 to 334 (VAIL…AAYF), 415 to 435 (GLYG…LMIG), 453 to 473 (VALV…VAVL), 519 to 539 (VLLG…ILAL), and 562 to 582 (LFVA…YVPA).

This sequence belongs to the KdpA family. The system is composed of three essential subunits: KdpA, KdpB and KdpC.

The protein localises to the cell inner membrane. Its function is as follows. Part of the high-affinity ATP-driven potassium transport (or Kdp) system, which catalyzes the hydrolysis of ATP coupled with the electrogenic transport of potassium into the cytoplasm. This subunit binds the periplasmic potassium ions and delivers the ions to the membrane domain of KdpB through an intramembrane tunnel. This is Potassium-transporting ATPase potassium-binding subunit from Bordetella bronchiseptica (strain ATCC BAA-588 / NCTC 13252 / RB50) (Alcaligenes bronchisepticus).